The following is a 382-amino-acid chain: Pyrimidine monooxygenase RutA (382 aa).

Residues 68–69 (IK), Asn-134, Glu-143, 159–160 (RY), and Ser-209 contribute to the FMN site.

The protein belongs to the NtaA/SnaA/DszA monooxygenase family. RutA subfamily.

The catalysed reaction is uracil + FMNH2 + NADH + O2 = (Z)-3-ureidoacrylate + FMN + NAD(+) + H2O + H(+). The enzyme catalyses thymine + FMNH2 + NADH + O2 = (Z)-2-methylureidoacrylate + FMN + NAD(+) + H2O + H(+). Functionally, catalyzes the pyrimidine ring opening between N-3 and C-4 by an unusual flavin hydroperoxide-catalyzed mechanism, adding oxygen atoms in the process to yield ureidoacrylate peracid, that immediately reacts with FMN forming ureidoacrylate and FMN-N(5)-oxide. The FMN-N(5)-oxide reacts spontaneously with NADH to produce FMN. Requires the flavin reductase RutF to regenerate FMN in vivo. In Escherichia coli O45:K1 (strain S88 / ExPEC), this protein is Pyrimidine monooxygenase RutA.